We begin with the raw amino-acid sequence, 181 residues long: Adenine phosphoribosyltransferase (181 aa).

It belongs to the purine/pyrimidine phosphoribosyltransferase family. In terms of assembly, homodimer.

The protein localises to the cytoplasm. The catalysed reaction is AMP + diphosphate = 5-phospho-alpha-D-ribose 1-diphosphate + adenine. The protein operates within purine metabolism; AMP biosynthesis via salvage pathway; AMP from adenine: step 1/1. Catalyzes a salvage reaction resulting in the formation of AMP, that is energically less costly than de novo synthesis. The chain is Adenine phosphoribosyltransferase from Cytophaga hutchinsonii (strain ATCC 33406 / DSM 1761 / CIP 103989 / NBRC 15051 / NCIMB 9469 / D465).